The following is a 249-amino-acid chain: MTKVLTDARSIRIKGRSFLALVLSPELPLDWWLGRLDDLASRSAGFFLGRPVVLDVADLEIDRKQLKSLLDELGQRNVRVMGIEGGRPSLFEPGMPPAMKGGRPAPDFEVPEVDPADPPKAGKGKAAAPITPEEVQPVRATASIIVREPVRSGQSVIFPEGDVTVVGSVASGAEIVAGGSVHIYGTLRGRALAGSVGNASARIFCRRLEAELLAIDGVYKTAEDMAPNLRGQSVQLWLEGDSIMAERLN.

A disordered region spans residues 89-130 (SLFEPGMPPAMKGGRPAPDFEVPEVDPADPPKAGKGKAAAPI). Over residues 119–129 (PKAGKGKAAAP) the composition is skewed to low complexity.

This sequence belongs to the MinC family. As to quaternary structure, interacts with MinD and FtsZ.

In terms of biological role, cell division inhibitor that blocks the formation of polar Z ring septums. Rapidly oscillates between the poles of the cell to destabilize FtsZ filaments that have formed before they mature into polar Z rings. Prevents FtsZ polymerization. The protein is Probable septum site-determining protein MinC of Rhizobium meliloti (strain 1021) (Ensifer meliloti).